Consider the following 213-residue polypeptide: FMN-dependent NADH:quinone oxidoreductase 3 (213 aa).

FMN contacts are provided by residues serine 10, 16-18 (SVS), and 96-99 (MYNF).

It belongs to the azoreductase type 1 family. Homodimer. FMN is required as a cofactor.

The enzyme catalyses 2 a quinone + NADH + H(+) = 2 a 1,4-benzosemiquinone + NAD(+). It carries out the reaction N,N-dimethyl-1,4-phenylenediamine + anthranilate + 2 NAD(+) = 2-(4-dimethylaminophenyl)diazenylbenzoate + 2 NADH + 2 H(+). Quinone reductase that provides resistance to thiol-specific stress caused by electrophilic quinones. Shows a preference for naphthoquinones such as plumbagin. In terms of biological role, also exhibits azoreductase activity. Catalyzes the reductive cleavage of the azo bond in aromatic azo compounds to the corresponding amines. Preferred substrates are methyl red, amaranth and p-aminoazobenzene sulfonamide (PAABSA). This Pseudomonas aeruginosa (strain ATCC 15692 / DSM 22644 / CIP 104116 / JCM 14847 / LMG 12228 / 1C / PRS 101 / PAO1) protein is FMN-dependent NADH:quinone oxidoreductase 3.